A 223-amino-acid polypeptide reads, in one-letter code: Type 3 secretion system stator protein (223 aa).

Belongs to the SctL stator family. As to quaternary structure, the core secretion machinery of the T3SS is composed of approximately 20 different proteins, including cytoplasmic components, a base, an export apparatus and a needle. This subunit is part of the cytosolic complex. Interacts directly with YscN/SctN (T3SS ATPase) and YscQ/SctQ (the major sorting platform component). Forms homodimers.

It is found in the cytoplasm. Component of the type III secretion system (T3SS), also called injectisome, which is used to inject bacterial effector proteins into eukaryotic host cells. Acts as a regulator of the YscN/SctN ATPase activity. Overexpression of YscL/SctL abolishes type III secretion and down-regulates the expression of secretion apparatus components. The chain is Type 3 secretion system stator protein from Yersinia enterocolitica.